The primary structure comprises 225 residues: Enolase-phosphatase E1 (225 aa).

This sequence belongs to the HAD-like hydrolase superfamily. MasA/MtnC family. In terms of assembly, monomer. The cofactor is Mg(2+).

The catalysed reaction is 5-methylsulfanyl-2,3-dioxopentyl phosphate + H2O = 1,2-dihydroxy-5-(methylsulfanyl)pent-1-en-3-one + phosphate. The protein operates within amino-acid biosynthesis; L-methionine biosynthesis via salvage pathway; L-methionine from S-methyl-5-thio-alpha-D-ribose 1-phosphate: step 3/6. It functions in the pathway amino-acid biosynthesis; L-methionine biosynthesis via salvage pathway; L-methionine from S-methyl-5-thio-alpha-D-ribose 1-phosphate: step 4/6. Functionally, bifunctional enzyme that catalyzes the enolization of 2,3-diketo-5-methylthiopentyl-1-phosphate (DK-MTP-1-P) into the intermediate 2-hydroxy-3-keto-5-methylthiopentenyl-1-phosphate (HK-MTPenyl-1-P), which is then dephosphorylated to form the acireductone 1,2-dihydroxy-3-keto-5-methylthiopentene (DHK-MTPene). This Pseudomonas aeruginosa (strain LESB58) protein is Enolase-phosphatase E1.